A 338-amino-acid chain; its full sequence is Ferrochelatase (338 aa).

Residues histidine 202 and glutamate 283 each contribute to the Fe cation site.

It belongs to the ferrochelatase family.

The protein resides in the cytoplasm. The enzyme catalyses heme b + 2 H(+) = protoporphyrin IX + Fe(2+). It participates in porphyrin-containing compound metabolism; protoheme biosynthesis; protoheme from protoporphyrin-IX: step 1/1. Catalyzes the ferrous insertion into protoporphyrin IX. This chain is Ferrochelatase, found in Acinetobacter baumannii (strain AB307-0294).